The sequence spans 163 residues: Nucleotide-binding protein C8J_0350 (163 aa).

It belongs to the YajQ family.

Functionally, nucleotide-binding protein. This is Nucleotide-binding protein C8J_0350 from Campylobacter jejuni subsp. jejuni serotype O:6 (strain 81116 / NCTC 11828).